We begin with the raw amino-acid sequence, 242 residues long: Placenta-expressed transcript 1 protein (242 aa).

Residues 1–26 (MAVLRSLLPQLGLFLCLALCFSPALS) form the signal peptide. Residues N47, N56, and N66 are each glycosylated (N-linked (GlcNAc...) asparagine). S223 is lipidated: GPI-anchor amidated serine. Residues 224–242 (PLAGALHILLVFLISKLLF) constitute a propeptide, removed in mature form.

Post-translationally, N-glycosylated. GPI-anchored. In terms of tissue distribution, present at high level in the dermal sheath cells near the bulge area of the hair follicle and in the differentiated sebocytes of the normal adult skin (at protein level).

It is found in the apical cell membrane. In terms of biological role, modulates leading keratinocyte migration and cellular adhesion to matrix proteins during a wound-healing response and promotes wound repair. May play a role during trichilemmal differentiation of the hair follicle. The polypeptide is Placenta-expressed transcript 1 protein (PLET1) (Mesocricetus auratus (Golden hamster)).